A 188-amino-acid polypeptide reads, in one-letter code: Peptidyl-prolyl cis-trans isomerase (188 aa).

The signal sequence occupies residues 1–20 (MLKRVAIVLGGLLISAHALA). Residues 21 to 181 (NTMVEMKTNL…QPVKIISVQI (161 aa)) form the PPIase cyclophilin-type domain.

It belongs to the cyclophilin-type PPIase family.

The protein localises to the periplasm. It catalyses the reaction [protein]-peptidylproline (omega=180) = [protein]-peptidylproline (omega=0). PPIases accelerate the folding of proteins. It catalyzes the cis-trans isomerization of proline imidic peptide bonds in oligopeptides. This protein is not essential for growth. Presumably plays a role in signal transduction. This chain is Peptidyl-prolyl cis-trans isomerase (rotA), found in Acinetobacter baylyi (strain ATCC 33305 / BD413 / ADP1).